The sequence spans 110 residues: Protein mistic (110 aa).

The Cytoplasmic portion of the chain corresponds to 1–7; the sequence is MFCTFFE. A helical transmembrane segment spans residues 8–22; it reads KHHRKWDILLEKSTG. Over 23–31 the chain is Extracellular; it reads VMEAMKVTS. A helical membrane pass occupies residues 32–55; sequence EEKEQLSTAIDRMNEGLDAFIQLY. Over 56–66 the chain is Cytoplasmic; sequence NESEIDEPLIQ. The chain crosses the membrane as a helical span at residues 67–81; the sequence is LDDDTAELMKQARDM. Residues 82-88 lie on the Extracellular side of the membrane; it reads YGQEKLN. A helical transmembrane segment spans residues 89 to 102; that stretch reads EKLNTIIKQILSIS. Topologically, residues 103-110 are cytoplasmic; sequence VSEEGEKE.

In terms of assembly, monomer.

Its subcellular location is the cell membrane. Chaperone that facilitates the production and integration of integral membrane proteins into the bacterial lipid bilayer. The protein is Protein mistic (mstX) of Bacillus subtilis (strain 168).